We begin with the raw amino-acid sequence, 168 residues long: MLAIHSLSSTPCSSGLTSPPKSTLLTKSSFHGLRLPSVNLSSSLRLRVQTPPSSVVVMVKKEDELKELRTKTNEQLNEEILQLKGELFMLRLQRSARENFKPSDFGRMRKRVARMLTVKREREIEQGVGKRLSRKLDKAWKRSIVVRPPPSLKKLQEKATAEAEAEKA.

The interval 1-20 (MLAIHSLSSTPCSSGLTSPP) is disordered. The N-terminal 58 residues, 1-58 (MLAIHSLSSTPCSSGLTSPPKSTLLTKSSFHGLRLPSVNLSSSLRLRVQTPPSSVVVM), are a transit peptide targeting the chloroplast.

Component of the chloroplast large ribosomal subunit (LSU). Mature 70S chloroplast ribosomes of higher plants consist of a small (30S) and a large (50S) subunit. The 30S small subunit contains 1 molecule of ribosomal RNA (16S rRNA) and 24 different proteins. The 50S large subunit contains 3 rRNA molecules (23S, 5S and 4.5S rRNA) and 33 different proteins.

The protein resides in the plastid. It is found in the chloroplast. Its function is as follows. Component of the chloroplast ribosome (chloro-ribosome), a dedicated translation machinery responsible for the synthesis of chloroplast genome-encoded proteins, including proteins of the transcription and translation machinery and components of the photosynthetic apparatus. In Spinacia oleracea (Spinach), this protein is Large ribosomal subunit protein uL29c (RPL29).